Consider the following 219-residue polypeptide: Pyridoxal 5'-phosphate synthase subunit PDX2 (219 aa).

Residue 52–54 (GES) coordinates L-glutamine. Catalysis depends on C87, which acts as the Nucleophile. Residues R121 and 153 to 154 (IR) contribute to the L-glutamine site. Residues H196 and E198 each act as charge relay system in the active site.

The protein belongs to the glutaminase PdxT/SNO family. In terms of assembly, in the presence of Pdx1, forms a dodecamer of heterodimers. Only shows activity in the heterodimer.

It localises to the cytoplasm. It carries out the reaction aldehydo-D-ribose 5-phosphate + D-glyceraldehyde 3-phosphate + L-glutamine = pyridoxal 5'-phosphate + L-glutamate + phosphate + 3 H2O + H(+). The enzyme catalyses L-glutamine + H2O = L-glutamate + NH4(+). It functions in the pathway cofactor biosynthesis; pyridoxal 5'-phosphate biosynthesis. In terms of biological role, catalyzes the hydrolysis of glutamine to glutamate and ammonia as part of the biosynthesis of pyridoxal 5'-phosphate. The resulting ammonia molecule is channeled to the active site of Pdx1. This Plasmodium falciparum (isolate 3D7) protein is Pyridoxal 5'-phosphate synthase subunit PDX2.